The sequence spans 507 residues: Glycerol kinase (507 aa).

Position 14 (threonine 14) interacts with ADP. ATP contacts are provided by threonine 14, threonine 15, and serine 16. Position 14 (threonine 14) interacts with sn-glycerol 3-phosphate. Arginine 18 provides a ligand contact to ADP. Sn-glycerol 3-phosphate contacts are provided by arginine 84, glutamate 85, tyrosine 137, and aspartate 247. 5 residues coordinate glycerol: arginine 84, glutamate 85, tyrosine 137, aspartate 247, and glutamine 248. Residues threonine 269 and glycine 312 each coordinate ADP. Threonine 269, glycine 312, glutamine 316, and glycine 413 together coordinate ATP. Positions 413 and 417 each coordinate ADP.

Belongs to the FGGY kinase family.

The catalysed reaction is glycerol + ATP = sn-glycerol 3-phosphate + ADP + H(+). The protein operates within polyol metabolism; glycerol degradation via glycerol kinase pathway; sn-glycerol 3-phosphate from glycerol: step 1/1. Inhibited by fructose 1,6-bisphosphate (FBP). Key enzyme in the regulation of glycerol uptake and metabolism. Catalyzes the phosphorylation of glycerol to yield sn-glycerol 3-phosphate. This Psychromonas ingrahamii (strain DSM 17664 / CCUG 51855 / 37) protein is Glycerol kinase.